We begin with the raw amino-acid sequence, 291 residues long: 3-hydroxy-5-phosphonooxypentane-2,4-dione thiolase (291 aa).

Lys-203 (schiff-base intermediate with substrate) is an active-site residue.

The protein belongs to the DeoC/FbaB aldolase family. As to quaternary structure, homodecamer.

Its subcellular location is the cytoplasm. The enzyme catalyses dihydroxyacetone phosphate + acetyl-CoA = 3-hydroxy-2,4-dioxopentyl phosphate + CoA. Functionally, involved in the degradation of phospho-AI-2, thereby terminating induction of the lsr operon and closing the AI-2 signaling cycle. Catalyzes the transfer of an acetyl moiety from 3-hydroxy-5-phosphonooxypentane-2,4-dione to CoA to form glycerone phosphate and acetyl-CoA. This Salmonella paratyphi A (strain ATCC 9150 / SARB42) protein is 3-hydroxy-5-phosphonooxypentane-2,4-dione thiolase.